A 234-amino-acid polypeptide reads, in one-letter code: uncharacterized protein (234 aa).

The segment at 1–23 (MVDQIRSPSWKSGFPSHQHQQGS) is disordered.

This is an uncharacterized protein from Caenorhabditis elegans.